The primary structure comprises 264 residues: Merozoite surface protein 2 (264 aa).

The first 20 residues, 1–20 (MKVIKTLSIINFFIFVTFNI), serve as a signal peptide directing secretion. Residues asparagine 22 and asparagine 36 are each glycosylated (N-linked (GlcNAc...) asparagine). The segment at 44–190 (ANEGSNTNSV…PQTAENENPA (147 aa)) is polymorphic region. The segment at 46–225 (EGSNTNSVGA…DSQKECTDGN (180 aa)) is disordered. 2 tandem repeats follow at residues 60-91 (ADTI…TPTA) and 92-123 (ADTI…TPTA). Residues 60–123 (ADTIASGSQR…GESQTTTPTA (64 aa)) are 2 X 32 AA perfects repeats. Over residues 70–81 (STNSASTSTTNN) the composition is skewed to low complexity. Positions 82–101 (GESQTTTPTAADTIASGSQR) are enriched in polar residues. Over residues 102–145 (STNSASTSTTNNGESQTTTPTAADTPTTTESNSPSPPITTTESS) the composition is skewed to low complexity. N-linked (GlcNAc...) asparagine glycosylation occurs at asparagine 152. Over residues 154–166 (TDGKGEESEKQNE) the composition is skewed to basic and acidic residues. Residues asparagine 168 and asparagine 213 are each glycosylated (N-linked (GlcNAc...) asparagine). A disulfide bridge connects residues cysteine 221 and cysteine 229. 2 N-linked (GlcNAc...) asparagine glycosylation sites follow: asparagine 237 and asparagine 238. Asparagine 238 carries the GPI-anchor amidated asparagine lipid modification. Residues 239–264 (SSNIASINKFVVLISATLVLSFAIFI) constitute a propeptide, removed in mature form.

The protein localises to the cell membrane. Its function is as follows. May play a role in the merozoite attachment to the erythrocyte. In Plasmodium falciparum (isolate fid3 / India), this protein is Merozoite surface protein 2.